Consider the following 534-residue polypeptide: NAD(P)H-quinone oxidoreductase chain 4 (534 aa).

14 helical membrane passes run 12-32 (FPWL…IPFF), 44-64 (FALS…INGF), 96-116 (MPLI…AWPV), 120-140 (PKLF…VFAV), 144-164 (LLFF…LAIW), 176-196 (FIIY…AMGF), 220-240 (ILCY…VPLH), 251-271 (TAPV…YALL), 285-305 (FAPL…LTSF), 314-334 (IAYS…SFSS), 340-360 (AMLQ…LVGA), 384-404 (FALW…SGFV), 425-445 (VVMA…LLSM), and 472-492 (VYII…PRLV).

This sequence belongs to the complex I subunit 4 family.

The protein resides in the cellular thylakoid membrane. It catalyses the reaction a plastoquinone + NADH + (n+1) H(+)(in) = a plastoquinol + NAD(+) + n H(+)(out). The enzyme catalyses a plastoquinone + NADPH + (n+1) H(+)(in) = a plastoquinol + NADP(+) + n H(+)(out). In terms of biological role, NDH-1 shuttles electrons from NAD(P)H, via FMN and iron-sulfur (Fe-S) centers, to quinones in the respiratory chain. The immediate electron acceptor for the enzyme in this species is believed to be plastoquinone. Couples the redox reaction to proton translocation (for every two electrons transferred, four hydrogen ions are translocated across the cytoplasmic membrane), and thus conserves the redox energy in a proton gradient. The sequence is that of NAD(P)H-quinone oxidoreductase chain 4 from Prochlorococcus marinus (strain MIT 9215).